A 162-amino-acid polypeptide reads, in one-letter code: Endoribonuclease YbeY (162 aa).

3 residues coordinate Zn(2+): histidine 118, histidine 122, and histidine 128.

This sequence belongs to the endoribonuclease YbeY family. The cofactor is Zn(2+).

Its subcellular location is the cytoplasm. Its function is as follows. Single strand-specific metallo-endoribonuclease involved in late-stage 70S ribosome quality control and in maturation of the 3' terminus of the 16S rRNA. The sequence is that of Endoribonuclease YbeY from Caulobacter sp. (strain K31).